A 331-amino-acid chain; its full sequence is UPF0194 membrane protein YbhG (331 aa).

The first 15 residues, M1–A15, serve as a signal peptide directing secretion. Positions E107–A208 form a coiled coil.

The protein belongs to the UPF0194 family.

The protein resides in the periplasm. In Escherichia coli O139:H28 (strain E24377A / ETEC), this protein is UPF0194 membrane protein YbhG.